Here is an 86-residue protein sequence, read N- to C-terminus: Neurotoxin 3FTx-LT (86 aa).

Positions 1-21 (MKTLLLTLVVVTIVCLDLGYT) are cleaved as a signal peptide. 5 disulfides stabilise this stretch: Cys24-Cys45, Cys27-Cys32, Cys38-Cys63, Cys67-Cys78, and Cys79-Cys84.

As to expression, expressed by the venom gland.

The protein localises to the secreted. Its function is as follows. Binds with low affinity to muscular (alpha-1-beta-1-delta-epsilon/CHRNA1-CHRNB1-CHRND-CHRNE) and very low affinity to neuronal (alpha-7/CHRNA7) nicotinic acetylcholine receptor (nAChR). In Bungarus fasciatus (Banded krait), this protein is Neurotoxin 3FTx-LT.